Consider the following 191-residue polypeptide: Lipoprotein signal peptidase (191 aa).

A run of 3 helical transmembrane segments spans residues V26 to W46, A84 to W104, and F110 to L130. Active-site residues include D137 and D163. A helical transmembrane segment spans residues F156–A176.

Belongs to the peptidase A8 family.

The protein localises to the cell membrane. It catalyses the reaction Release of signal peptides from bacterial membrane prolipoproteins. Hydrolyzes -Xaa-Yaa-Zaa-|-(S,diacylglyceryl)Cys-, in which Xaa is hydrophobic (preferably Leu), and Yaa (Ala or Ser) and Zaa (Gly or Ala) have small, neutral side chains.. The protein operates within protein modification; lipoprotein biosynthesis (signal peptide cleavage). This protein specifically catalyzes the removal of signal peptides from prolipoproteins. This chain is Lipoprotein signal peptidase, found in Deinococcus radiodurans (strain ATCC 13939 / DSM 20539 / JCM 16871 / CCUG 27074 / LMG 4051 / NBRC 15346 / NCIMB 9279 / VKM B-1422 / R1).